The primary structure comprises 444 residues: E3 ubiquitin-protein ligase APD2 (444 aa).

Residues 1-15 (MSLPDSLPSSSSSPP) show a composition bias toward low complexity. Residues 1–41 (MSLPDSLPSSSSSPPVTREETGFHRFEHHGNDSGFDHRDRP) are disordered. The segment covering 17–41 (TREETGFHRFEHHGNDSGFDHRDRP) has biased composition (basic and acidic residues). Transmembrane regions (helical) follow at residues 74 to 94 (VVVVATFCIFVSMTLILGLYG) and 312 to 332 (IAYIVCMGVVTALLLIVSSLF). The RING-type zinc finger occupies 393-432 (CAICYDAPRDCFFLSCGHCVACFQCGTRIAETSGFCPVCR).

Interacts with At1g78040, At1g10650, VHA-c4/AVAP4, VHA-c''2/VMA16 and TUFA. In terms of tissue distribution, expressed in the shoot apical meristems (SAM), root tips, pollen and inflorescences.

The protein localises to the endomembrane system. It catalyses the reaction S-ubiquitinyl-[E2 ubiquitin-conjugating enzyme]-L-cysteine + [acceptor protein]-L-lysine = [E2 ubiquitin-conjugating enzyme]-L-cysteine + N(6)-ubiquitinyl-[acceptor protein]-L-lysine.. It functions in the pathway protein modification; protein ubiquitination. Functionally, exhibits E2-dependent E3 ligase activity. Involved in pollen mitosis II (PMII) regulation during male gametogenesis. This Arabidopsis thaliana (Mouse-ear cress) protein is E3 ubiquitin-protein ligase APD2.